Reading from the N-terminus, the 293-residue chain is Mimecan (293 aa).

The first 19 residues, 1-19 (MKTLQATFFLVAFVPLVKP), serve as a signal peptide directing secretion. Asn-60 carries an N-linked (GlcNAc...) asparagine glycan. LRR repeat units lie at residues 107 to 126 (EAVP…FNKI), 127 to 150 (KRIA…GNMI), 151 to 174 (EEIE…ENRL), 175 to 194 (VKLP…QNRI), 195 to 220 (KSRG…HNAL), 221 to 241 (ESVP…HNNI), and 242 to 272 (TTIT…GNPI). Asn-240 and Asn-253 each carry an N-linked (GlcNAc...) asparagine glycan. A disulfide bridge links Cys-250 with Cys-283.

It belongs to the small leucine-rich proteoglycan (SLRP) family. SLRP class III subfamily. Contains keratan sulfate. As to expression, expressed in many tissues.

The protein localises to the secreted. The protein resides in the extracellular space. It localises to the extracellular matrix. Its function is as follows. Induces bone formation in conjunction with TGF-beta-1 or TGF-beta-2. This Coturnix japonica (Japanese quail) protein is Mimecan (OGN).